A 419-amino-acid chain; its full sequence is Gamma-glutamyl phosphate reductase (419 aa).

The protein belongs to the gamma-glutamyl phosphate reductase family.

Its subcellular location is the cytoplasm. It carries out the reaction L-glutamate 5-semialdehyde + phosphate + NADP(+) = L-glutamyl 5-phosphate + NADPH + H(+). It functions in the pathway amino-acid biosynthesis; L-proline biosynthesis; L-glutamate 5-semialdehyde from L-glutamate: step 2/2. In terms of biological role, catalyzes the NADPH-dependent reduction of L-glutamate 5-phosphate into L-glutamate 5-semialdehyde and phosphate. The product spontaneously undergoes cyclization to form 1-pyrroline-5-carboxylate. The sequence is that of Gamma-glutamyl phosphate reductase from Yersinia enterocolitica serotype O:8 / biotype 1B (strain NCTC 13174 / 8081).